We begin with the raw amino-acid sequence, 210 residues long: Putative 3-methyladenine DNA glycosylase (210 aa).

This sequence belongs to the DNA glycosylase MPG family.

This Corynebacterium glutamicum (strain R) protein is Putative 3-methyladenine DNA glycosylase.